A 92-amino-acid chain; its full sequence is RNA-binding protein Hfq (92 aa).

Positions 9–68 (DPYLNALRRERIPVSIYLVNGIKLQGQIESFDQFVILLKNTVSQMVYKHAISTVVPARSV) constitute a Sm domain. The segment covering 69–81 (SHNNGGTSHTQQA) has biased composition (polar residues). The segment at 69–92 (SHNNGGTSHTQQAPAVEAVADKAE) is disordered.

Belongs to the Hfq family. In terms of assembly, homohexamer.

In terms of biological role, RNA chaperone that binds small regulatory RNA (sRNAs) and mRNAs to facilitate mRNA translational regulation in response to envelope stress, environmental stress and changes in metabolite concentrations. Also binds with high specificity to tRNAs. This chain is RNA-binding protein Hfq, found in Actinobacillus pleuropneumoniae serotype 5b (strain L20).